A 247-amino-acid polypeptide reads, in one-letter code: Probable transcriptional regulatory protein ABO_0750 (247 aa).

The protein belongs to the TACO1 family.

It is found in the cytoplasm. The chain is Probable transcriptional regulatory protein ABO_0750 from Alcanivorax borkumensis (strain ATCC 700651 / DSM 11573 / NCIMB 13689 / SK2).